Here is a 489-residue protein sequence, read N- to C-terminus: Long chain base biosynthesis protein 2a (489 aa).

Residues 2-22 (ITIPYLTAVSTYFSYGLLFAF) traverse the membrane as a helical segment. K311 bears the N6-(pyridoxal phosphate)lysine mark.

It belongs to the class-II pyridoxal-phosphate-dependent aminotransferase family. In terms of assembly, heterodimer with LCB1. Component of the serine palmitoyltransferase (SPT) complex, composed of LCB1 and LCB2 (LCB2a or LCB2b). Requires pyridoxal 5'-phosphate as cofactor. As to expression, ubiquitous. Detected in leaves, roots, stems, flowers and at a lower level in mature seeds.

It is found in the endoplasmic reticulum membrane. The enzyme catalyses L-serine + hexadecanoyl-CoA + H(+) = 3-oxosphinganine + CO2 + CoA. Its pathway is lipid metabolism; sphingolipid metabolism. In terms of biological role, serine palmitoyltransferase (SPT). The heterodimer formed with LCB1 constitutes the catalytic core. Involved in the regulation of the programmed cell death (PCD) signaling pathway. Plays an important role during male gametogenesis and embryogenesis. In Arabidopsis thaliana (Mouse-ear cress), this protein is Long chain base biosynthesis protein 2a (LCB2a).